A 236-amino-acid chain; its full sequence is MNNEKNKQDRENLNRQDERKSSEIKSERKSGLDLIEVRKQLDRIESVANEKNENESEKLENLKNRIEELEKSEQDRNERTNILMKRLEASTSNFNNKLDVFEEKTKHARLNFETTAKHYIKRLDEDNLKLDFQQAIQDELSDTKDEIREVTKQAREETKEYKEILESKIKDHNKVVDKSNTALKVMTKGVTNIFFVLIIFVLVMLVTGPIVISLVLNIYIALLMVLLMTTKVHGDI.

The tract at residues 1-29 (MNNEKNKQDRENLNRQDERKSSEIKSERK) is disordered.

This is an uncharacterized protein from Staphylococcus aureus.